Consider the following 237-residue polypeptide: Phosphoribosylaminoimidazole-succinocarboxamide synthase (237 aa).

The protein belongs to the SAICAR synthetase family.

The enzyme catalyses 5-amino-1-(5-phospho-D-ribosyl)imidazole-4-carboxylate + L-aspartate + ATP = (2S)-2-[5-amino-1-(5-phospho-beta-D-ribosyl)imidazole-4-carboxamido]succinate + ADP + phosphate + 2 H(+). Its pathway is purine metabolism; IMP biosynthesis via de novo pathway; 5-amino-1-(5-phospho-D-ribosyl)imidazole-4-carboxamide from 5-amino-1-(5-phospho-D-ribosyl)imidazole-4-carboxylate: step 1/2. In Deinococcus radiodurans (strain ATCC 13939 / DSM 20539 / JCM 16871 / CCUG 27074 / LMG 4051 / NBRC 15346 / NCIMB 9279 / VKM B-1422 / R1), this protein is Phosphoribosylaminoimidazole-succinocarboxamide synthase.